A 436-amino-acid chain; its full sequence is MVLPTVAIVGRPNVGKSTLFNRIAGERISIVEDVEGVTRDRIYATGEWLNRKFSLIDTGGIDDVDAPFMEQIKHQAQIAMDEADVIVFVVSGKEGVTDADEYVAKMLYRTNKPVILAVNKVDNPEMRNDIYDFYALGLGDPYPASSVHGIGTGDILDAIIEKLPVEEEEINDNTIRFSLIGRPNVGKSSLINAILGEERVIASPVAGTTRDAIDTHFTDQDGQEYNMIDTAGMRKSGKVYENTEKYSVMRAMRAIDRSDVVLLVINAEEGIREYDKRIAGFAHEAGKGMIIVVNKWDLLEKDNHTVAKWEADIRDQFQFLSYAPIIFVSALTKQRLNKLPELIKKISESQNKRIPSAVLNDVIMDAIAINPTPTDKGKRLKIFYATQVSVKPPTFVIFVNEEELMHFSYLRFLENQIRAAFTFEGTPIHLIARKRK.

2 consecutive EngA-type G domains span residues P4–E167 and I175–N351. GTP-binding positions include G10–S17, D57–I61, N119–D122, G181–S188, D229–M233, and N294–D297. Positions K352–K436 constitute a KH-like domain.

Belongs to the TRAFAC class TrmE-Era-EngA-EngB-Septin-like GTPase superfamily. EngA (Der) GTPase family. As to quaternary structure, associates with the 50S ribosomal subunit.

Functionally, GTPase that plays an essential role in the late steps of ribosome biogenesis. The polypeptide is GTPase Der (Streptococcus uberis (strain ATCC BAA-854 / 0140J)).